The primary structure comprises 308 residues: Serpentine receptor class V-1 (308 aa).

7 helical membrane-spanning segments follow: residues 15–35 (VSTA…YILF), 46–68 (PFFR…STFF), 88–108 (VVPI…IIFI), 135–155 (LLLI…STDF), 184–204 (AMVD…AIFI), 222–242 (LALS…CSLL), and 256–276 (TMWF…LLAL).

This sequence belongs to the nematode receptor-like protein srv family.

It is found in the membrane. This is Serpentine receptor class V-1 (srv-1) from Caenorhabditis elegans.